The primary structure comprises 179 residues: Large ribosomal subunit protein uL5 (179 aa).

This sequence belongs to the universal ribosomal protein uL5 family. In terms of assembly, part of the 50S ribosomal subunit; part of the 5S rRNA/L5/L18/L25 subcomplex. Contacts the 5S rRNA and the P site tRNA. Forms a bridge to the 30S subunit in the 70S ribosome.

In terms of biological role, this is one of the proteins that bind and probably mediate the attachment of the 5S RNA into the large ribosomal subunit, where it forms part of the central protuberance. In the 70S ribosome it contacts protein S13 of the 30S subunit (bridge B1b), connecting the 2 subunits; this bridge is implicated in subunit movement. Contacts the P site tRNA; the 5S rRNA and some of its associated proteins might help stabilize positioning of ribosome-bound tRNAs. This is Large ribosomal subunit protein uL5 from Vibrio vulnificus (strain CMCP6).